The sequence spans 347 residues: GMP reductase (347 aa).

108–131 (ADFQKTKDVMALSDELIFICIDIA) lines the NADP(+) pocket. The K(+) site is built by glycine 181 and glycine 183. Cysteine 186 (thioimidate intermediate) is an active-site residue. 216–239 (IIGDGGCTCPGDVAKAFGGGADFV) serves as a coordination point for NADP(+).

Belongs to the IMPDH/GMPR family. GuaC type 1 subfamily. Homotetramer.

It catalyses the reaction IMP + NH4(+) + NADP(+) = GMP + NADPH + 2 H(+). In terms of biological role, catalyzes the irreversible NADPH-dependent deamination of GMP to IMP. It functions in the conversion of nucleobase, nucleoside and nucleotide derivatives of G to A nucleotides, and in maintaining the intracellular balance of A and G nucleotides. This is GMP reductase from Vibrio cholerae serotype O1 (strain ATCC 39541 / Classical Ogawa 395 / O395).